The chain runs to 151 residues: MPIWVDADACPKPVKEILFRAAHQRQILLTLVANQYIAVPASPFIKSLQVSSGFDVADNHIVASLVAGDLVITADIPLAADAIAKGAAVINPRGQEYTKDSIGARLNMRDFMETMRSSGVVMQDGPPPFSQQDRQSFANALDRWIARQRKI.

Belongs to the UPF0178 family.

The sequence is that of UPF0178 protein CJA_1978 from Cellvibrio japonicus (strain Ueda107) (Pseudomonas fluorescens subsp. cellulosa).